A 208-amino-acid chain; its full sequence is Probable GTP-binding protein EngB (208 aa).

An EngB-type G domain is found at 23–205 (LTSEMVILGR…RQTLLKYLLT (183 aa)). Residues 31 to 38 (GRSNVGKS), 57 to 61 (GKTRL), 84 to 87 (DLPG), 154 to 157 (TKFD), and 182 to 184 (FNA) each bind GTP. Residues S38 and T59 each coordinate Mg(2+).

This sequence belongs to the TRAFAC class TrmE-Era-EngA-EngB-Septin-like GTPase superfamily. EngB GTPase family. Requires Mg(2+) as cofactor.

In terms of biological role, necessary for normal cell division and for the maintenance of normal septation. The polypeptide is Probable GTP-binding protein EngB (Helicobacter pylori (strain G27)).